We begin with the raw amino-acid sequence, 162 residues long: NADH-quinone oxidoreductase subunit I (162 aa).

4Fe-4S ferredoxin-type domains lie at 53–83 and 93–122; these read LRRY…IESE and TRYD…ETRV. Residues C63, C66, C69, C73, C102, C105, C108, and C112 each contribute to the [4Fe-4S] cluster site.

The protein belongs to the complex I 23 kDa subunit family. In terms of assembly, NDH-1 is composed of 14 different subunits. Subunits NuoA, H, J, K, L, M, N constitute the membrane sector of the complex. The cofactor is [4Fe-4S] cluster.

It localises to the cell inner membrane. It carries out the reaction a quinone + NADH + 5 H(+)(in) = a quinol + NAD(+) + 4 H(+)(out). NDH-1 shuttles electrons from NADH, via FMN and iron-sulfur (Fe-S) centers, to quinones in the respiratory chain. The immediate electron acceptor for the enzyme in this species is believed to be ubiquinone. Couples the redox reaction to proton translocation (for every two electrons transferred, four hydrogen ions are translocated across the cytoplasmic membrane), and thus conserves the redox energy in a proton gradient. This Nitrosomonas eutropha (strain DSM 101675 / C91 / Nm57) protein is NADH-quinone oxidoreductase subunit I.